The chain runs to 507 residues: Probable malate:quinone oxidoreductase 2 (507 aa).

This sequence belongs to the MQO family. The cofactor is FAD.

The enzyme catalyses (S)-malate + a quinone = a quinol + oxaloacetate. It participates in carbohydrate metabolism; tricarboxylic acid cycle; oxaloacetate from (S)-malate (quinone route): step 1/1. The protein is Probable malate:quinone oxidoreductase 2 of Pseudomonas aeruginosa (strain ATCC 15692 / DSM 22644 / CIP 104116 / JCM 14847 / LMG 12228 / 1C / PRS 101 / PAO1).